The following is a 467-amino-acid chain: Glutamate--tRNA ligase (467 aa).

Positions 13–23 match the 'HIGH' region motif; it reads PSPTGFLHLGG. The segment covering 118-133 has biased composition (basic and acidic residues); sequence ARGDKPRYDGTWRPEP. Residues 118 to 141 form a disordered region; it reads ARGDKPRYDGTWRPEPGKTLPAIP. Residues 245–249 carry the 'KMSKS' region motif; that stretch reads KLSKR. ATP is bound at residue Lys-248.

It belongs to the class-I aminoacyl-tRNA synthetase family. Glutamate--tRNA ligase type 1 subfamily. As to quaternary structure, monomer.

It is found in the cytoplasm. The enzyme catalyses tRNA(Glu) + L-glutamate + ATP = L-glutamyl-tRNA(Glu) + AMP + diphosphate. Catalyzes the attachment of glutamate to tRNA(Glu) in a two-step reaction: glutamate is first activated by ATP to form Glu-AMP and then transferred to the acceptor end of tRNA(Glu). This chain is Glutamate--tRNA ligase, found in Bordetella avium (strain 197N).